An 83-amino-acid polypeptide reads, in one-letter code: Exodeoxyribonuclease 7 small subunit (83 aa).

It belongs to the XseB family. In terms of assembly, heterooligomer composed of large and small subunits.

The protein localises to the cytoplasm. It carries out the reaction Exonucleolytic cleavage in either 5'- to 3'- or 3'- to 5'-direction to yield nucleoside 5'-phosphates.. Functionally, bidirectionally degrades single-stranded DNA into large acid-insoluble oligonucleotides, which are then degraded further into small acid-soluble oligonucleotides. This chain is Exodeoxyribonuclease 7 small subunit, found in Bradyrhizobium diazoefficiens (strain JCM 10833 / BCRC 13528 / IAM 13628 / NBRC 14792 / USDA 110).